The primary structure comprises 669 residues: Probable L-type lectin-domain containing receptor kinase I.2 (669 aa).

The first 24 residues, 1–24 (MAQRFYLLLLLLIFLVNLICFSSQ), serve as a signal peptide directing secretion. The Extracellular portion of the chain corresponds to 25–295 (QDLSFVFNGF…FTEQKRKRSP (271 aa)). Residues 26–266 (DLSFVFNGFN…NQYILGWSFS (241 aa)) form a legume-lectin like region. N-linked (GlcNAc...) asparagine glycans are attached at residues asparagine 132, asparagine 189, asparagine 212, and asparagine 233. Residues 296-316 (LLIVLLVILTLVVIGGLGGYY) traverse the membrane as a helical segment. Topologically, residues 317–669 (LYRRKKYAEV…SHTILNGDGR (353 aa)) are cytoplasmic. The Protein kinase domain occupies 351–609 (FNKDGRLGKG…MQYINRDQAL (259 aa)). Residues 357–365 (LGKGGFGEV) and lysine 379 contribute to the ATP site. Residue aspartate 475 is the Proton acceptor of the active site.

The protein in the C-terminal section; belongs to the protein kinase superfamily. Ser/Thr protein kinase family. This sequence in the N-terminal section; belongs to the leguminous lectin family.

The protein localises to the cell membrane. It catalyses the reaction L-seryl-[protein] + ATP = O-phospho-L-seryl-[protein] + ADP + H(+). The enzyme catalyses L-threonyl-[protein] + ATP = O-phospho-L-threonyl-[protein] + ADP + H(+). In terms of biological role, involved in resistance response to the pathogenic fungus Alternaria brassicicola. The polypeptide is Probable L-type lectin-domain containing receptor kinase I.2 (Arabidopsis thaliana (Mouse-ear cress)).